The primary structure comprises 441 residues: D-aminoacyl-tRNA deacylase (441 aa).

It belongs to the DtdA deacylase family. In terms of assembly, monomer. Zn(2+) is required as a cofactor.

The catalysed reaction is a D-aminoacyl-tRNA + H2O = a tRNA + a D-alpha-amino acid + H(+). The enzyme catalyses glycyl-tRNA(Ala) + H2O = tRNA(Ala) + glycine + H(+). Its function is as follows. D-aminoacyl-tRNA deacylase with broad substrate specificity. By recycling D-aminoacyl-tRNA to D-amino acids and free tRNA molecules, this enzyme counteracts the toxicity associated with the formation of D-aminoacyl-tRNA entities in vivo. The protein is D-aminoacyl-tRNA deacylase of Natronomonas pharaonis (strain ATCC 35678 / DSM 2160 / CIP 103997 / JCM 8858 / NBRC 14720 / NCIMB 2260 / Gabara) (Halobacterium pharaonis).